The sequence spans 40 residues: MPPRRKRVSSAPRRRRRTYRRTTAHKHQERPVHRRRRRRH.

The disordered stretch occupies residues 1-40 (MPPRRKRVSSAPRRRRRTYRRTTAHKHQERPVHRRRRRRH).

As to expression, testis.

Its subcellular location is the nucleus. It is found in the chromosome. Its function is as follows. Protamines substitute for histones in the chromatin of sperm during the haploid phase of spermatogenesis. They compact sperm DNA into a highly condensed, stable and inactive complex. The protein is Protamine-2 (PBP2) of Bufo japonicus (Japanese common toad).